Reading from the N-terminus, the 860-residue chain is Protein argonaute-2 (860 aa).

At Tyr2 the chain carries 3'-nitrotyrosine. The PAZ domain occupies 230-349; that stretch reads PVIEFVCEVL…LPLEVCNIVA (120 aa). Residues 312–317 are interaction with guide RNA; that stretch reads YFKDRH. Phosphoserine is present on Ser388. Positions 518–819 constitute a Piwi domain; that stretch reads LVVVILPGKT…VAFRARYHLV (302 aa). Residues 525–567 form an interaction with guide RNA region; it reads GKTPVYAEVKRVGDTVLGMATQCVQMKNVQRTTPQTLSNLCLK. The segment at 588–591 is interaction with GW182 family members; the sequence is FQQP. An a divalent metal cation-binding site is contributed by Asp598. Positions 651-661 are interaction with GW182 family members; it reads LIQFYKSTRFK. Asp670 is a binding site for a divalent metal cation. Position 701 is a 4-hydroxyproline (Pro701). Interaction with guide RNA stretches follow at residues 710 to 711, 754 to 762, and 791 to 813; these read KR, HAGIQGTSR, and YVRC…VAFR. His808 contacts a divalent metal cation. Residues Ser825, Ser829, Ser832, and Ser835 each carry the phosphoserine modification.

Belongs to the argonaute family. Ago subfamily. As to quaternary structure, interacts with DICER1 through its Piwi domain and with TARBP2 during assembly of the RNA-induced silencing complex (RISC). Together, DICER1, AGO2 and TARBP2 constitute the trimeric RISC loading complex (RLC), or micro-RNA (miRNA) loading complex (miRLC). Within the RLC/miRLC, DICER1 and TARBP2 are required to process precursor miRNAs (pre-miRNAs) to mature miRNAs and then load them onto AGO2. AGO2 bound to the mature miRNA constitutes the minimal RISC and may subsequently dissociate from DICER1 and TARBP2. Note however that the term RISC has also been used to describe the trimeric RLC/miRLC. The formation of RISC complexes containing siRNAs rather than miRNAs appears to occur independently of DICER1. Interacts with AGO1. Also interacts with DDB1, DDX5, DDX6, DDX20, DHX30, DHX36, DDX47, DHX9, ELAVL, FXR1, GEMIN4, HNRNPF, IGF2BP1, ILF3, IMP8, MATR3, PABPC1, PRMT5, P4HA1, P4HB, RBM4, SART3, TNRC6A, TNRC6B, UPF1 and YBX1. Interacts with the P-body components DCP1A and XRN1. Associates with polysomes and messenger ribonucleoproteins (mNRPs). Interacts with RBM4; the interaction is modulated under stress-induced conditions, occurs under both cell proliferation and differentiation conditions and in an RNA- and phosphorylation-independent manner. Interacts with LIMD1, WTIP and AJUBA. Interacts with TRIM71. Interacts with APOBEC3G in an RNA-dependent manner. Interacts with APOBEC3A, APOBEC3C, APOBEC3F and APOBEC3H. Interacts with DICER1, TARBP2, EIF6, MOV10 and RPL7A (60S ribosome subunit); they form a large RNA-induced silencing complex (RISC). Interacts with FMR1. Interacts with ZFP36. Interacts with RC3H1; the interaction is RNA independent. Interacts with ARB2A. Found in a complex composed of AGO2, CHD7 and ARB2A. Interacts with SND1 and SYT11. Interacts with CLNK. Interacts with GARRE1. Interacts with GRB2; this interaction is important for the formation of a ternary complex containing GRB2, AGO2 and DICER1. Mg(2+) serves as cofactor. Requires Mn(2+) as cofactor. Post-translationally, hydroxylated. 4-hydroxylation appears to enhance protein stability but is not required for miRNA-binding or endonuclease activity. In terms of processing, ubiquitinated on surface-exposed lysines by a SCF-like E3 ubiquitin-protein ligase complex containing ZSWIM8 during target-directed microRNA degradation (TDMD), a process that mediates degradation of microRNAs (miRNAs). Ubiquitination by the SCF-like E3 ubiquitin-protein ligase complex containing ZSWIM8 leads to its subsequent degradation, thereby exposing miRNAs for degradation. ZSWIM8 recognizes and binds AGO2 when it is engaged with a TDMD target. Phosphorylation at Ser-388 by AKT3; leads to up-regulate translational repression of microRNA target and down-regulate endonucleolytic cleavage. Post-translationally, a phosphorylation cycle of C-terminal serine cluster (Ser-825-Ser-835) regulates the release of target mRNAs. Target-binding leads to phosphorylation of these residues by CSNK1A1, which reduces the affinity of AGO2 for mRNA and enables target release. The ANKRD52-PPP6C phosphatase complex dephosphorylates the residues, which primes AGO2 for binding a new target. Ubiquitous expression in 9.5 day embryos with highest levels in forebrain, heart, limb buds, and branchial arches.

Its subcellular location is the cytoplasm. It localises to the P-body. The protein resides in the nucleus. The catalysed reaction is Endonucleolytic cleavage to 5'-phosphomonoester.. Required for RNA-mediated gene silencing (RNAi) by the RNA-induced silencing complex (RISC). The 'minimal RISC' appears to include AGO2 bound to a short guide RNA such as a microRNA (miRNA) or short interfering RNA (siRNA). These guide RNAs direct RISC to complementary mRNAs that are targets for RISC-mediated gene silencing. The precise mechanism of gene silencing depends on the degree of complementarity between the miRNA or siRNA and its target. Binding of RISC to a perfectly complementary mRNA generally results in silencing due to endonucleolytic cleavage of the mRNA specifically by AGO2. Binding of RISC to a partially complementary mRNA results in silencing through inhibition of translation, and this is independent of endonuclease activity. May inhibit translation initiation by binding to the 7-methylguanosine cap, thereby preventing the recruitment of the translation initiation factor eIF4-E. May also inhibit translation initiation via interaction with EIF6, which itself binds to the 60S ribosomal subunit and prevents its association with the 40S ribosomal subunit. The inhibition of translational initiation leads to the accumulation of the affected mRNA in cytoplasmic processing bodies (P-bodies), where mRNA degradation may subsequently occur. In some cases RISC-mediated translational repression is also observed for miRNAs that perfectly match the 3' untranslated region (3'-UTR). Can also up-regulate the translation of specific mRNAs under certain growth conditions. Binds to the AU element of the 3'-UTR of the TNF (TNF-alpha) mRNA and up-regulates translation under conditions of serum starvation. Also required for transcriptional gene silencing (TGS), in which short RNAs known as antigene RNAs or agRNAs direct the transcriptional repression of complementary promoter regions. Regulates lymphoid and erythroid development and function, and this is independent of endonuclease activity. The sequence is that of Protein argonaute-2 (Ago2) from Mus musculus (Mouse).